Reading from the N-terminus, the 452-residue chain is Tripartite motif-containing protein 49D (452 aa).

Residues 15–56 (CPICLNYFIDPVTIDCGHSFCRPCFYLNWQDIPILTQCFECL) form an RING-type zinc finger. Residues 88–129 (SEEQMCGTHRETKKIFCEVDRSLLCLLCSSSLEHRYHRHCPA) form a B box-type zinc finger. Zn(2+)-binding residues include cysteine 93, histidine 96, cysteine 115, and histidine 121. Residues 269-452 (ELRAGPITGL…LRPIFCCVHL (184 aa)) enclose the B30.2/SPRY domain.

The protein belongs to the TRIM/RBCC family.

The chain is Tripartite motif-containing protein 49D from Homo sapiens (Human).